The primary structure comprises 809 residues: Spindle pole body component alp14 (809 aa).

HEAT repeat units lie at residues 127–164 and 167–204; these read DSAA…QFGA and IPSK…WTGD. Disordered regions lie at residues 233 to 274, 507 to 608, and 619 to 638; these read PPKQ…SDDQ, AKAP…SGAL, and ELDD…RYEH. Over residues 239–253 the composition is skewed to polar residues; sequence FLKSQQPTSEPNVET. The span at 262-274 shows a compositional bias: acidic residues; sequence ENEESEPEPSDDQ. Positions 509 to 518 are enriched in basic residues; that stretch reads APTKKSKVKP. Composition is skewed to low complexity over residues 526 to 551 and 582 to 595; these read VVVP…SPRK and SRGL…SLQQ. Ser-543 and Ser-548 each carry phosphoserine. Polar residues predominate over residues 597–608; it reads VKASTPLNSGAL. Residues 637 to 697 are a coiled coil; it reads EHPKVLEDND…NTLRSARKAS (61 aa). Phosphoserine is present on residues Ser-697 and Ser-720.

It belongs to the TOG/XMAP215 family. In terms of assembly, interacts with alp14.

It is found in the cytoplasm. The protein localises to the cytoskeleton. It localises to the microtubule organizing center. Its subcellular location is the spindle pole body. The protein resides in the chromosome. It is found in the centromere. The protein localises to the kinetochore. Its function is as follows. Required for bipolar spindle formation and proper chromosome segregation. Has a role in connecting the kinetochores and the plus end of pole to chromosome microtubules. Also required for the activation of the spindle checkpoint pathway. In Schizosaccharomyces pombe (strain 972 / ATCC 24843) (Fission yeast), this protein is Spindle pole body component alp14 (alp14).